The sequence spans 407 residues: 1-deoxy-D-xylulose 5-phosphate reductoisomerase (407 aa).

The NADPH site is built by T25, G26, S27, I28, N53, and N136. K137 lines the 1-deoxy-D-xylulose 5-phosphate pocket. E138 contacts NADPH. D162 provides a ligand contact to Mn(2+). S163, E164, S188, and H211 together coordinate 1-deoxy-D-xylulose 5-phosphate. E164 contacts Mn(2+). G217 contacts NADPH. 1-deoxy-D-xylulose 5-phosphate is bound by residues S224, N229, K230, and E233. Residue E233 participates in Mn(2+) binding.

Belongs to the DXR family. Mg(2+) is required as a cofactor. Mn(2+) serves as cofactor.

The catalysed reaction is 2-C-methyl-D-erythritol 4-phosphate + NADP(+) = 1-deoxy-D-xylulose 5-phosphate + NADPH + H(+). Its pathway is isoprenoid biosynthesis; isopentenyl diphosphate biosynthesis via DXP pathway; isopentenyl diphosphate from 1-deoxy-D-xylulose 5-phosphate: step 1/6. Its function is as follows. Catalyzes the NADPH-dependent rearrangement and reduction of 1-deoxy-D-xylulose-5-phosphate (DXP) to 2-C-methyl-D-erythritol 4-phosphate (MEP). This is 1-deoxy-D-xylulose 5-phosphate reductoisomerase from Rhodopseudomonas palustris (strain BisA53).